The following is a 445-amino-acid chain: Chromosomal replication initiator protein DnaA (445 aa).

Residues 1–73 (MSPNSTLWQT…NELATKYSST (73 aa)) form a domain I, interacts with DnaA modulators region. Residues 73 to 102 (TPVRLKFVSQEEVIEEPVADRKLTIDYRQG) form a domain II region. The tract at residues 103-323 (NLNSTYTFDS…GALIRLISYA (221 aa)) is domain III, AAA+ region. 4 residues coordinate ATP: Gly147, Gly149, Lys150, and Thr151. The tract at residues 324-445 (QTFNLEITMN…KFAVDSIVKK (122 aa)) is domain IV, binds dsDNA.

The protein belongs to the DnaA family. Oligomerizes as a right-handed, spiral filament on DNA at oriC.

It is found in the cytoplasm. Its function is as follows. Plays an essential role in the initiation and regulation of chromosomal replication. ATP-DnaA binds to the origin of replication (oriC) to initiate formation of the DNA replication initiation complex once per cell cycle. Binds the DnaA box (a 9 base pair repeat at the origin) and separates the double-stranded (ds)DNA. Forms a right-handed helical filament on oriC DNA; dsDNA binds to the exterior of the filament while single-stranded (ss)DNA is stabiized in the filament's interior. The ATP-DnaA-oriC complex binds and stabilizes one strand of the AT-rich DNA unwinding element (DUE), permitting loading of DNA polymerase. After initiation quickly degrades to an ADP-DnaA complex that is not apt for DNA replication. Binds acidic phospholipids. This chain is Chromosomal replication initiator protein DnaA, found in Acholeplasma laidlawii.